A 996-amino-acid polypeptide reads, in one-letter code: Sarcoplasmic/endoplasmic reticulum calcium ATPase 1 (996 aa).

The Cytoplasmic segment spans residues 1-48; it reads MENAHTKSPAECLSYFGVNEHTGLSPDQFKKNLDKFGYNELPAEEGKS. The helical transmembrane segment at 49 to 69 threads the bilayer; the sequence is IWDLIVEQFEDLLVRILLLAA. The Lumenal portion of the chain corresponds to 70 to 89; it reads CISFVLAWFEEGEETITAFV. The helical transmembrane segment at 90-110 threads the bilayer; sequence EPFVILLILIANAIVGVWQER. At 111 to 253 the chain is on the cytoplasmic side; sequence NAEDAIEALK…QEKTPLQAKL (143 aa). The helical transmembrane segment at 254–273 threads the bilayer; the sequence is DEFGEQLSKVISLICVAVWA. At 274 to 295 the chain is on the lumenal side; it reads INIGHFNDPVHGGSWIRGAVYY. The chain crosses the membrane as a helical span at residues 296 to 313; that stretch reads FKIAVALAVAAIPEGLPA. 4 residues coordinate Ca(2+): V304, A305, I307, and E309. Residues 314-754 are Cytoplasmic-facing; the sequence is VITTCLALGT…EEGRAIYNNM (441 aa). D351 functions as the 4-aspartylphosphate intermediate in the catalytic mechanism. Mg(2+) contacts are provided by D351 and T353. T353, E442, R489, K512, R557, T622, G623, D624, R675, and K681 together coordinate ATP. Residue D700 coordinates Mg(2+). Residue N703 participates in ATP binding. The chain crosses the membrane as a helical span at residues 755 to 774; sequence KQFIRYLISSNVGEVVCIFL. Residues N765 and E768 each contribute to the Ca(2+) site. Residues 775 to 784 are Lumenal-facing; sequence TAALGLPEAL. Residues 785 to 805 traverse the membrane as a helical segment; sequence IPVQLLWVNLVTDGLPATALG. The interval 785–805 is interaction with PLN; it reads IPVQLLWVNLVTDGLPATALG. Positions 793, 796, and 797 each coordinate Ca(2+). Over 806 to 825 the chain is Cytoplasmic; the sequence is FNPPDLDIMGKPPRSPKEPL. The chain crosses the membrane as a helical span at residues 826–848; that stretch reads ISGWLFFRYMAIGGYVGAATVGG. The Lumenal segment spans residues 849 to 894; sequence AAWWFLYDSTGPAVTYYQLSHFMQCHNHNEDFTGVDCDIFEASPPM. C873 and C885 are disulfide-bonded. Residues 895 to 914 traverse the membrane as a helical segment; the sequence is TMALSVLVTIEMCNALNSLS. E905 contacts Ca(2+). Over 915–927 the chain is Cytoplasmic; that stretch reads ENQSLIRMPPWSN. The helical transmembrane segment at 928-946 threads the bilayer; that stretch reads LWLMAAMTLSMSLHFMIIY. Residues 929-940 are interaction with PLN; it reads WLMAAMTLSMSL. Residues 947-961 are Lumenal-facing; that stretch reads VDPLPMIFKLTHLTF. The helical transmembrane segment at 962–982 threads the bilayer; the sequence is DQWLMVFKLSFPVILIDEVLK. Over 983–996 the chain is Cytoplasmic; the sequence is FFARNYIETGKEVK.

Belongs to the cation transport ATPase (P-type) (TC 3.A.3) family. Type IIA subfamily. In terms of assembly, interacts with sarcolipin (SLN). Interacts with phospholamban (PLN). Interacts with myoregulin (MRLN). Interacts with DWORF. It depends on Mg(2+) as a cofactor.

The protein resides in the endoplasmic reticulum membrane. Its subcellular location is the sarcoplasmic reticulum membrane. It catalyses the reaction Ca(2+)(in) + ATP + H2O = Ca(2+)(out) + ADP + phosphate + H(+). Inhibited by sarcolipin (SLN) and myoregulin (MRLN). Also shown to be inhibited by phospholamban (PLN) in vitro. Enhanced by DWORF; DWORF increases activity by displacing sarcolipin (SLN), phospholamban (PLN) and myoregulin (MRLN). Key regulator of striated muscle performance by acting as the major Ca(2+) ATPase responsible for the reuptake of cytosolic Ca(2+) into the sarcoplasmic reticulum. Catalyzes the hydrolysis of ATP coupled with the translocation of calcium from the cytosol to the sarcoplasmic reticulum lumen. Contributes to calcium sequestration involved in muscular excitation/contraction. This Makaira nigricans (Atlantic blue marlin) protein is Sarcoplasmic/endoplasmic reticulum calcium ATPase 1 (atp2a1).